Consider the following 64-residue polypeptide: Large ribosomal subunit protein bL35 (64 aa).

The segment covering 1–26 (MPKMKSHRGASKRFKRTASGKLKRSH) has biased composition (basic residues). Residues 1-42 (MPKMKSHRGASKRFKRTASGKLKRSHAYTSHLFANKSTKAKR) form a disordered region.

The protein belongs to the bacterial ribosomal protein bL35 family.

This chain is Large ribosomal subunit protein bL35, found in Exiguobacterium sp. (strain ATCC BAA-1283 / AT1b).